Here is a 505-residue protein sequence, read N- to C-terminus: Histidine ammonia-lyase (505 aa).

The segment at residues A141–G143 is a cross-link (5-imidazolinone (Ala-Gly)). 2,3-didehydroalanine (Ser) is present on S142.

This sequence belongs to the PAL/histidase family. Contains an active site 4-methylidene-imidazol-5-one (MIO), which is formed autocatalytically by cyclization and dehydration of residues Ala-Ser-Gly.

It is found in the cytoplasm. The enzyme catalyses L-histidine = trans-urocanate + NH4(+). It participates in amino-acid degradation; L-histidine degradation into L-glutamate; N-formimidoyl-L-glutamate from L-histidine: step 1/3. In Bacillus cytotoxicus (strain DSM 22905 / CIP 110041 / 391-98 / NVH 391-98), this protein is Histidine ammonia-lyase.